A 344-amino-acid chain; its full sequence is Dihydroorotate dehydrogenase (quinone) (344 aa).

FMN contacts are provided by residues 65-69 and Thr-89; that span reads AGFDK. Lys-69 is a binding site for substrate. 114–118 contributes to the substrate binding site; that stretch reads NRMGF. Asn-145 and Asn-178 together coordinate FMN. Asn-178 contributes to the substrate binding site. Catalysis depends on Ser-181, which acts as the Nucleophile. Asn-183 is a substrate binding site. The FMN site is built by Lys-215 and Thr-243. Position 244–245 (244–245) interacts with substrate; that stretch reads NT. FMN-binding positions include Gly-269, Gly-298, and 319–320; that span reads YT.

It belongs to the dihydroorotate dehydrogenase family. Type 2 subfamily. As to quaternary structure, monomer. The cofactor is FMN.

It localises to the cell membrane. It catalyses the reaction (S)-dihydroorotate + a quinone = orotate + a quinol. Its pathway is pyrimidine metabolism; UMP biosynthesis via de novo pathway; orotate from (S)-dihydroorotate (quinone route): step 1/1. In terms of biological role, catalyzes the conversion of dihydroorotate to orotate with quinone as electron acceptor. The polypeptide is Dihydroorotate dehydrogenase (quinone) (Clavibacter sepedonicus (Clavibacter michiganensis subsp. sepedonicus)).